Reading from the N-terminus, the 177-residue chain is Large ribosomal subunit protein uL6 (177 aa).

This sequence belongs to the universal ribosomal protein uL6 family. In terms of assembly, part of the 50S ribosomal subunit.

In terms of biological role, this protein binds to the 23S rRNA, and is important in its secondary structure. It is located near the subunit interface in the base of the L7/L12 stalk, and near the tRNA binding site of the peptidyltransferase center. The protein is Large ribosomal subunit protein uL6 of Rhizobium meliloti (strain 1021) (Ensifer meliloti).